We begin with the raw amino-acid sequence, 451 residues long: Phosphoglucosamine mutase (451 aa).

Ser102 functions as the Phosphoserine intermediate in the catalytic mechanism. 4 residues coordinate Mg(2+): Ser102, Asp243, Asp245, and Asp247. A Phosphoserine modification is found at Ser102.

Belongs to the phosphohexose mutase family. Mg(2+) serves as cofactor. In terms of processing, activated by phosphorylation.

It catalyses the reaction alpha-D-glucosamine 1-phosphate = D-glucosamine 6-phosphate. Functionally, catalyzes the conversion of glucosamine-6-phosphate to glucosamine-1-phosphate. This is Phosphoglucosamine mutase from Salinispora tropica (strain ATCC BAA-916 / DSM 44818 / JCM 13857 / NBRC 105044 / CNB-440).